The sequence spans 401 residues: L-methionine gamma-lyase (401 aa).

Pyridoxal 5'-phosphate is bound by residues 59–61 and 89–90; these read YTR and GI. Y114 provides a ligand contact to substrate. 210–212 provides a ligand contact to pyridoxal 5'-phosphate; that stretch reads SAT. K213 carries the post-translational modification N6-(pyridoxal phosphate)lysine. A substrate-binding site is contributed by R377.

It belongs to the trans-sulfuration enzymes family. L-methionine gamma-lyase subfamily. As to quaternary structure, homotetramer; dimer of active dimers. It depends on pyridoxal 5'-phosphate as a cofactor.

It catalyses the reaction L-methionine + H2O = methanethiol + 2-oxobutanoate + NH4(+). It carries out the reaction L-homocysteine + H2O = 2-oxobutanoate + hydrogen sulfide + NH4(+) + H(+). Functionally, catalyzes the alpha,gamma-elimination of L-methionine to produce methanethiol, 2-oxobutanoate and ammonia; methanethiol (methyl mercaptan) is considered to be one of the main causes of the oral malodor associated with periodontitis and may also play a role in the pathogenicity of T.denticola. Also displays homocysteine desulfhydrase activity, degrading homocysteine to produce hydrogen sulfide, 2-oxobutanoate and ammonia. The protein is L-methionine gamma-lyase of Treponema denticola (strain ATCC 35405 / DSM 14222 / CIP 103919 / JCM 8153 / KCTC 15104).